Reading from the N-terminus, the 1303-residue chain is DNA-directed RNA polymerase subunit beta' (1303 aa).

Positions 60, 62, 75, and 78 each coordinate Zn(2+). Positions 535, 537, and 539 each coordinate Mg(2+). C876, C953, C960, and C963 together coordinate Zn(2+).

It belongs to the RNA polymerase beta' chain family. In terms of assembly, the RNAP catalytic core consists of 2 alpha, 1 beta, 1 beta' and 1 omega subunit. When a sigma factor is associated with the core the holoenzyme is formed, which can initiate transcription. Requires Mg(2+) as cofactor. The cofactor is Zn(2+).

The catalysed reaction is RNA(n) + a ribonucleoside 5'-triphosphate = RNA(n+1) + diphosphate. Its function is as follows. DNA-dependent RNA polymerase catalyzes the transcription of DNA into RNA using the four ribonucleoside triphosphates as substrates. The chain is DNA-directed RNA polymerase subunit beta' from Saccharopolyspora erythraea (strain ATCC 11635 / DSM 40517 / JCM 4748 / NBRC 13426 / NCIMB 8594 / NRRL 2338).